Here is an 85-residue protein sequence, read N- to C-terminus: Large ribosomal subunit protein bL27 (85 aa).

The disordered stretch occupies residues Met-1–Gly-22.

The protein belongs to the bacterial ribosomal protein bL27 family.

This chain is Large ribosomal subunit protein bL27, found in Marinomonas sp. (strain MWYL1).